The primary structure comprises 392 residues: INCREASED PETAL GROWTH ANISOTROPY 1-like protein 1 (392 aa).

Residues 11–52 (LLRLVKELQAYLVRNDKLEKENHELRQEVARLRAQVSNLKSH) adopt a coiled-coil conformation. Polar residues-rich tracts occupy residues 65 to 76 (QSSYDGSNTDGS) and 100 to 109 (PTIQGQSTAT). The segment at 65 to 128 (QSSYDGSNTD…SKRTLGKRSV (64 aa)) is disordered. The stretch at 269 to 299 (KDSLTQALQRIQSLQDRLEESVNNTEKMRDS) forms a coiled coil.

Belongs to the IPGA1 family.

The protein resides in the cytoplasm. It is found in the cytoskeleton. Functionally, microtubule-associated protein probably involved in the regulation of microtubule organization. The sequence is that of INCREASED PETAL GROWTH ANISOTROPY 1-like protein 1 from Arabidopsis thaliana (Mouse-ear cress).